We begin with the raw amino-acid sequence, 299 residues long: Glutamyl-Q tRNA(Asp) synthetase (299 aa).

Residues 9–13 (RFAPS) and glutamate 45 each bind L-glutamate. A 'HIGH' region motif is present at residues 12–22 (PSPTGPLHFGS). Cysteine 101, cysteine 103, and cysteine 118 together coordinate Zn(2+). Positions 170 and 188 each coordinate L-glutamate. The 'KMSKS' region motif lies at 226-230 (KLSKS). Lysine 229 provides a ligand contact to ATP. Residues 279 to 299 (QLLPRQRQRDRATCAYERQRD) are disordered. Residues 285–299 (RQRDRATCAYERQRD) are compositionally biased toward basic and acidic residues.

This sequence belongs to the class-I aminoacyl-tRNA synthetase family. GluQ subfamily. Zn(2+) serves as cofactor.

Catalyzes the tRNA-independent activation of glutamate in presence of ATP and the subsequent transfer of glutamate onto a tRNA(Asp). Glutamate is transferred on the 2-amino-5-(4,5-dihydroxy-2-cyclopenten-1-yl) moiety of the queuosine in the wobble position of the QUC anticodon. The sequence is that of Glutamyl-Q tRNA(Asp) synthetase from Xanthomonas oryzae pv. oryzae (strain KACC10331 / KXO85).